The primary structure comprises 417 residues: Imidazolonepropionase (417 aa).

Fe(3+) is bound by residues His77 and His79. Zn(2+) is bound by residues His77 and His79. Residues Arg86, Tyr149, and His182 each coordinate 4-imidazolone-5-propanoate. Tyr149 serves as a coordination point for N-formimidoyl-L-glutamate. Residue His247 coordinates Fe(3+). Residue His247 coordinates Zn(2+). Position 250 (Gln250) interacts with 4-imidazolone-5-propanoate. Asp322 is a Fe(3+) binding site. Asp322 contributes to the Zn(2+) binding site. Positions 324 and 326 each coordinate N-formimidoyl-L-glutamate. Thr327 is a 4-imidazolone-5-propanoate binding site.

It belongs to the metallo-dependent hydrolases superfamily. HutI family. Zn(2+) is required as a cofactor. The cofactor is Fe(3+).

The protein resides in the cytoplasm. The enzyme catalyses 4-imidazolone-5-propanoate + H2O = N-formimidoyl-L-glutamate. Its pathway is amino-acid degradation; L-histidine degradation into L-glutamate; N-formimidoyl-L-glutamate from L-histidine: step 3/3. Catalyzes the hydrolytic cleavage of the carbon-nitrogen bond in imidazolone-5-propanoate to yield N-formimidoyl-L-glutamate. It is the third step in the universal histidine degradation pathway. The sequence is that of Imidazolonepropionase from Cupriavidus taiwanensis (strain DSM 17343 / BCRC 17206 / CCUG 44338 / CIP 107171 / LMG 19424 / R1) (Ralstonia taiwanensis (strain LMG 19424)).